Consider the following 686-residue polypeptide: Eomesodermin homolog (686 aa).

The tract at residues G27–L46 is disordered. A compositionally biased stretch (low complexity) spans G34–P43. Position 107 is a phosphoserine (S107). The segment at residues L276 to D456 is a DNA-binding region (T-box). Positions A571–P686 are required for transcription activation. A disordered region spans residues A639 to P686. Over residues S646–S657 the composition is skewed to low complexity. A compositionally biased stretch (basic and acidic residues) spans K659–S673.

As to expression, expressed in CD8+ T-cells.

Its subcellular location is the nucleus. Functionally, functions as a transcriptional activator playing a crucial role during development. Functions in trophoblast differentiation and later in gastrulation, regulating both mesoderm delamination and endoderm specification. Plays a role in brain development being required for the specification and the proliferation of the intermediate progenitor cells and their progeny in the cerebral cortex. Required for differentiation and migration of unipolar dendritic brush cells. Also involved in the differentiation of CD8+ T-cells during immune response regulating the expression of lytic effector genes. The protein is Eomesodermin homolog (EOMES) of Homo sapiens (Human).